The sequence spans 279 residues: 2'-N-acetylparomamine deacetylase (279 aa).

Positions 31, 34, and 157 each coordinate Zn(2+). The segment at 245 to 279 (PRRWTGGTAGAGHAAGRRGAPHTERVWTPAPAGAR) is disordered. Residues 246–258 (RRWTGGTAGAGHA) show a composition bias toward low complexity.

Belongs to the PIGL family. Zn(2+) is required as a cofactor.

The enzyme catalyses 2'-N-acetylparomamine + H2O = paromamine + acetate. The catalysed reaction is 2'''-acetyl-6'''-hydroxyneomycin C + H2O = 6'''-deamino-6'''-hydroxyneomycin C + acetate. It functions in the pathway antibiotic biosynthesis; neomycin biosynthesis. Its function is as follows. Deacetylase involved in the biosynthesis of neomycin by mediating 2 steps of the pathway. Deacetylates both 2'-N-acetylparomamine and 2'''-acetyl-6'''-hydroxyneomycin C. The polypeptide is 2'-N-acetylparomamine deacetylase (neoL) (Streptomyces fradiae (Streptomyces roseoflavus)).